The following is a 278-amino-acid chain: Shikimate dehydrogenase (NADP(+)) (278 aa).

Residues 19-21 and threonine 66 contribute to the shikimate site; that span reads SRS. Lysine 70 (proton acceptor) is an active-site residue. Residues asparagine 91 and aspartate 106 each coordinate shikimate. NADP(+) contacts are provided by residues 129-133 and phenylalanine 221; that span reads GAGGA. Position 223 (tyrosine 223) interacts with shikimate. An NADP(+)-binding site is contributed by glycine 242.

This sequence belongs to the shikimate dehydrogenase family. In terms of assembly, homodimer.

The enzyme catalyses shikimate + NADP(+) = 3-dehydroshikimate + NADPH + H(+). The protein operates within metabolic intermediate biosynthesis; chorismate biosynthesis; chorismate from D-erythrose 4-phosphate and phosphoenolpyruvate: step 4/7. Functionally, involved in the biosynthesis of the chorismate, which leads to the biosynthesis of aromatic amino acids. Catalyzes the reversible NADPH linked reduction of 3-dehydroshikimate (DHSA) to yield shikimate (SA). The chain is Shikimate dehydrogenase (NADP(+)) from Anaeromyxobacter dehalogenans (strain 2CP-1 / ATCC BAA-258).